Reading from the N-terminus, the 202-residue chain is MNTHYLTINLLRAIAFGLAYSILEVNVPLFHYIPVVDYRVFYLIIFAIANMTLPLSLFLGNFFLSMASEDMFYWIIKAQTPFQYAWYYPVIDGIPIADVIEVIISVFSYYYYVRHHNETTNIFHFIFVDTDNTSSSQQQQCGMWYAFTHGKAHDEYGALTLVLVSVLAILSSHSLSLTAFATLSLIVGTGIFVDLWAHCFHH.

The next 5 membrane-spanning stretches (helical) occupy residues 13-33, 40-60, 87-107, 156-176, and 177-197; these read AIAF…FHYI, VFYL…LFLG, YYPV…ISVF, YGAL…HSLS, and LTAF…DLWA.

It localises to the host membrane. The sequence is that of Putative transmembrane protein ORF202 from Acidianus filamentous virus 2 (isolate Italy/Pozzuoli) (AFV-2).